The following is a 485-amino-acid chain: MSLFDHTVSELHTLLQKKEVSISDLVDESYRRIGEVEEKVQAFLTLNEEQARAKAKELDDKLAKGEETNPLFGLPIGIKDNIVTKGLRTTCASKILYNFDPIYDATVMERLNAAGAITIGKLNMDEFAMGSSTENSGFQLTRNPWDLERVPGGSSGGSAAAVAAGEVPFSLGSDTGGSIRQPAAFCGVVGLKPTYGRVSRFGLVAFASSLDQIGPITRTVEDNAYLLQVIAGVDPMDSTSANIDVPNYVEALTGDIKGLKIAVPKEYLGEGVAEEVRQSVLAALSVLEKLGATWEEVSLPHSKYALATYYLLASSEASANLARFDGVRYGYRTDNAKNLIDMYKQTRSEGFGSEVKRRIMLGTFALSSGYYDAYYKKAQKVRTLIKRDFENVFEQYDVIIGPTTPTPAFKIGEKTSDPLTMYMNDILTIPVNLAGVPAISVPCGFVDGLPVGLQIIGKHFDESTVYRVAHAFEQATDYHKQKPVL.

Catalysis depends on charge relay system residues Lys79 and Ser154. Catalysis depends on Ser178, which acts as the Acyl-ester intermediate.

Belongs to the amidase family. GatA subfamily. Heterotrimer of A, B and C subunits.

It catalyses the reaction L-glutamyl-tRNA(Gln) + L-glutamine + ATP + H2O = L-glutaminyl-tRNA(Gln) + L-glutamate + ADP + phosphate + H(+). Functionally, allows the formation of correctly charged Gln-tRNA(Gln) through the transamidation of misacylated Glu-tRNA(Gln) in organisms which lack glutaminyl-tRNA synthetase. The reaction takes place in the presence of glutamine and ATP through an activated gamma-phospho-Glu-tRNA(Gln). The polypeptide is Glutamyl-tRNA(Gln) amidotransferase subunit A (Geobacillus thermodenitrificans (strain NG80-2)).